The sequence spans 450 residues: MRLATEPASLPSGLPEPRRVAVLSVHTSPLAQPGTGDAGGMNVYVLQTALELANRGVDVEIFTRATSSADQPVVPVAPGVLVRNVVAGPFEGLDKNDLPTQLCAFTAGVLRAEATHEPGYYDIVHSHYWLSGQVGWLAADRWAVPLVHTAHTLAAVKNASLAAGDAPEPPMRSIGEQQVVDAADRLIVNTEHEAQQLVSLHQADPARIDVVHPGVDLATFTPGDRLAARAALGLDANSRIVAFVGRIQPLKAPDVLLRAAALLPDVQVLIAGGPSGSGLISRPGAGGLATPDNLVNLAAELGMTDRVTFLPPQSRDNLVQVYRAADVVAVPSYSESFGLVAVEAQACGTPVVAAAVGGLPVAVRDGVSGALVDGHDPGDWAGTLADVLAADPATLSRAAVDHAATFSWSHTVDALLAGYGRAIADHRARHQGQLARRSGRRFSMRRGVRA.

1D-myo-inositol 3-phosphate is bound at residue histidine 26. UDP-N-acetyl-alpha-D-glucosamine contacts are provided by residues 32–33 (QP) and glycine 40. Residues 37 to 42 (DAGGMN), lysine 95, tyrosine 128, threonine 152, and arginine 172 each bind 1D-myo-inositol 3-phosphate. UDP-N-acetyl-alpha-D-glucosamine contacts are provided by arginine 246, lysine 251, and glutamine 313. Tyrosine 322, arginine 323, and alanine 325 together coordinate Mg(2+). UDP-N-acetyl-alpha-D-glucosamine is bound by residues glutamate 335 and glutamate 343. Mg(2+) is bound at residue threonine 349.

This sequence belongs to the glycosyltransferase group 1 family. MshA subfamily. As to quaternary structure, homodimer.

The catalysed reaction is 1D-myo-inositol 3-phosphate + UDP-N-acetyl-alpha-D-glucosamine = 1D-myo-inositol 2-acetamido-2-deoxy-alpha-D-glucopyranoside 3-phosphate + UDP + H(+). In terms of biological role, catalyzes the transfer of a N-acetyl-glucosamine moiety to 1D-myo-inositol 3-phosphate to produce 1D-myo-inositol 2-acetamido-2-deoxy-glucopyranoside 3-phosphate in the mycothiol biosynthesis pathway. In Mycolicibacterium vanbaalenii (strain DSM 7251 / JCM 13017 / BCRC 16820 / KCTC 9966 / NRRL B-24157 / PYR-1) (Mycobacterium vanbaalenii), this protein is D-inositol 3-phosphate glycosyltransferase.